The chain runs to 610 residues: MTEQFDSKTFLKTVTSQPGVYRMYDTSGTVIYVGKAKDLKKRLASYFRAQVTSRKTESLVKNIVQIDVTVTHTETEALLLEHNYIKLYQPRYNVLLRDDKSYPYIFLSADKHPRLAMYRGAKHFKGEYFGPFPNTHAVRESLILLQKLFPIRQCEDSVYRNRSRPCLQYQIGRCLGPCVKGLVSEDEYQQQVDYIRLFLSGKDQQVLTRLIERMEQASQQLKFEDAARYRDQIQAVRQVTERQFVSGTDDDLDVISVAFDAGMACLHVLFIRQGKVLGSRSYYPKIPTGTTLDEIVQTFLGQFYLQGSQNRTLPSEILLDFTLPEKDILSDSLSEISGRKIHIQTRPRGDKARYLKLARTNATIALSTRLSQQSTIHQRLDSLTKLVKLAKIQRMECFDISHTMGEQTVASCVVFDSNGPLRSEYRRYNISGITPGDDYAAMNQVLRRRYGKALDESKIPDIIFIDGGKGQLAQAIDVFQSLDVEWDKTRPQLIGVAKGSDRKAGLETLFFATEDKSIALPPDSPALHVIQHIRDESHNHAITGHRQRRSKVRNTSTLESIEGVGPKRRQMLLKYMGGLQPLRNASVEEIAKVPTISYALAEKIYNALKH.

One can recognise a GIY-YIG domain in the interval 16 to 94; that stretch reads SQPGVYRMYD…IKLYQPRYNV (79 aa). Residues 204 to 239 form the UVR domain; the sequence is QQVLTRLIERMEQASQQLKFEDAARYRDQIQAVRQV.

This sequence belongs to the UvrC family. Interacts with UvrB in an incision complex.

The protein resides in the cytoplasm. Functionally, the UvrABC repair system catalyzes the recognition and processing of DNA lesions. UvrC both incises the 5' and 3' sides of the lesion. The N-terminal half is responsible for the 3' incision and the C-terminal half is responsible for the 5' incision. The chain is UvrABC system protein C from Photorhabdus laumondii subsp. laumondii (strain DSM 15139 / CIP 105565 / TT01) (Photorhabdus luminescens subsp. laumondii).